The following is a 1059-amino-acid chain: WD repeat-containing protein on Y chromosome (1059 aa).

11 WD repeats span residues 121-161, 170-209, 214-256, 344-383, 387-426, 476-515, 528-567, 616-658, 714-759, 766-805, and 849-888; these read DFCP…ALTA, RSKT…FTLK, RLPQ…KVTT, CVPR…KPSV, GHTS…LLQT, SHTK…KMTI, LEPV…CMRT, QHSD…RRYD, MRQL…GFKG, MAGD…IPNE, and AHRA…IGLL.

The protein is WD repeat-containing protein on Y chromosome of Anopheles gambiae (African malaria mosquito).